The sequence spans 458 residues: Probable M18 family aminopeptidase 1 (458 aa).

Positions 95, 170, and 434 each coordinate Zn(2+).

This sequence belongs to the peptidase M18 family. The cofactor is Zn(2+).

This Borreliella afzelii (strain PKo) (Borrelia afzelii) protein is Probable M18 family aminopeptidase 1.